Reading from the N-terminus, the 258-residue chain is Axonemal dynein light intermediate polypeptide 1 (258 aa).

2 disordered regions span residues 19–60 and 207–231; these read RNTE…CVPD and VNEQKAKCEATEKRESERRQVEEKK. The span at 34-48 shows a compositional bias: low complexity; it reads SPQQPGPSGSAPQLP. Residues 176–255 are a coiled coil; that stretch reads MRKALQAEQG…LKAQLEGIIA (80 aa).

This sequence belongs to the inner dynein arm light chain family. Interacts with CFAP45. Interacts with DYNC1H1.

It localises to the cell projection. It is found in the cilium. The protein localises to the flagellum. Its subcellular location is the dynein axonemal particle. The protein resides in the cytoplasm. Its function is as follows. Involved in sperm flagellum assembly. The sequence is that of Axonemal dynein light intermediate polypeptide 1 (DNALI1) from Macaca fascicularis (Crab-eating macaque).